The primary structure comprises 475 residues: Glycogen synthase (475 aa).

Lysine 15 serves as a coordination point for ADP-alpha-D-glucose.

Belongs to the glycosyltransferase 1 family. Bacterial/plant glycogen synthase subfamily.

The catalysed reaction is [(1-&gt;4)-alpha-D-glucosyl](n) + ADP-alpha-D-glucose = [(1-&gt;4)-alpha-D-glucosyl](n+1) + ADP + H(+). The protein operates within glycan biosynthesis; glycogen biosynthesis. Functionally, synthesizes alpha-1,4-glucan chains using ADP-glucose. This chain is Glycogen synthase, found in Anaeromyxobacter dehalogenans (strain 2CP-C).